The chain runs to 146 residues: VKWSDKERAVIISIFAGLDYEDIGPKALSRCLIVYPWTQRYFGSFGNLSTPAAIMGNPKIAAHGIKVLHGLDRGVKNMDNIKDAYTELSILHSETLHVDPDNFKLLADCLTIVVAAKMGCAFTPDTQLAFQKFLAVVVSALGKQYC.

Residues 2–146 enclose the Globin domain; sequence KWSDKERAVI…VVSALGKQYC (145 aa). Heme b contacts are provided by His63 and His92.

Belongs to the globin family. Hb1 is a heterotetramer of two alpha-1 chains and two beta-1 chains; Hb2 is a heterotetramer of two alpha-2 chains and two beta-1 chains. As to expression, red blood cells.

Its function is as follows. Involved in oxygen transport from gills to the various peripheral tissues. In Anarhichas minor (Arctic spotted wolffish), this protein is Hemoglobin subunit beta-1 (hbb1).